The primary structure comprises 188 residues: ATP-dependent protease subunit HslV (188 aa).

T8 is a catalytic residue. Na(+) contacts are provided by A165, C168, and T171.

This sequence belongs to the peptidase T1B family. HslV subfamily. In terms of assembly, a double ring-shaped homohexamer of HslV is capped on each side by a ring-shaped HslU homohexamer. The assembly of the HslU/HslV complex is dependent on binding of ATP.

It is found in the cytoplasm. The enzyme catalyses ATP-dependent cleavage of peptide bonds with broad specificity.. Allosterically activated by HslU binding. In terms of biological role, protease subunit of a proteasome-like degradation complex believed to be a general protein degrading machinery. The protein is ATP-dependent protease subunit HslV of Neorickettsia sennetsu (strain ATCC VR-367 / Miyayama) (Ehrlichia sennetsu).